We begin with the raw amino-acid sequence, 378 residues long: Putative glycosyltransferase ORF378 (378 aa).

The protein belongs to the glycosyltransferase group 1 family. Glycosyltransferase 4 subfamily.

This is Putative glycosyltransferase ORF378 from Acidianus sp. F28 (AFV-2).